Consider the following 294-residue polypeptide: Ribosomal protein L11 methyltransferase (294 aa).

S-adenosyl-L-methionine contacts are provided by threonine 144, glycine 165, aspartate 187, and asparagine 229.

Belongs to the methyltransferase superfamily. PrmA family.

It is found in the cytoplasm. The catalysed reaction is L-lysyl-[protein] + 3 S-adenosyl-L-methionine = N(6),N(6),N(6)-trimethyl-L-lysyl-[protein] + 3 S-adenosyl-L-homocysteine + 3 H(+). Its function is as follows. Methylates ribosomal protein L11. The sequence is that of Ribosomal protein L11 methyltransferase from Pseudomonas paraeruginosa (strain DSM 24068 / PA7) (Pseudomonas aeruginosa (strain PA7)).